The primary structure comprises 306 residues: MAAVDDLQFEEFGNAATSLTANPDATTVNIEDPGETPKHQPGSPRGSGREEDDELLGNDDSDKTELLAGQKKSSPFWTFEYYQTFFDVDTYQVFDRIKGSLLPIPGKNFVRLYIRSNPDLYGPFWICATLVFAIAISGNLSNFLIHLGEKTYHYVPEFRKVSIAATIIYAYAWLVPLALWGFLMWRNSKVMNIVSYSFLEIVCVYGYSLFIYIPTAILWIIPQKAVRWILVMIALGISGSLLAMTFWPAVREDNRRVALATIVTIVLLHMLLSVGCLAYFFDAPEMDHLPTTTATPNQTVAAAKSS.

The Cytoplasmic segment spans residues Met-1–Asp-119. The disordered stretch occupies residues Asn-14 to Asp-62. The segment covering Ala-15–Asn-29 has biased composition (polar residues). The span at Glu-50–Asp-59 shows a compositional bias: acidic residues. A helical transmembrane segment spans residues Leu-120–Leu-140. At Ser-141–Ser-162 the chain is on the lumenal side. Residues Ile-163–Leu-183 traverse the membrane as a helical segment. Topologically, residues Met-184 to Glu-200 are cytoplasmic. The helical transmembrane segment at Ile-201–Ile-221 threads the bilayer. At Pro-222–Arg-227 the chain is on the lumenal side. A helical membrane pass occupies residues Trp-228–Pro-248. Topologically, residues Ala-249 to Arg-256 are cytoplasmic. The helical transmembrane segment at Val-257 to Leu-277 threads the bilayer. The Lumenal segment spans residues Ala-278–Ser-306. A glycan (N-linked (GlcNAc...) asparagine) is linked at Asn-297.

This sequence belongs to the YIP1 family. Interacts with YIPF6; this interaction may stabilize YIPF1. May also form a ternary complex with YIPF2 and YIPF6.

The protein resides in the golgi apparatus. Its subcellular location is the cis-Golgi network membrane. It is found in the trans-Golgi network membrane. The protein localises to the late endosome membrane. The protein is Protein YIPF1 (YIPF1) of Homo sapiens (Human).